The primary structure comprises 318 residues: L-lactate dehydrogenase (318 aa).

NAD(+) is bound by residues valine 15, aspartate 36, and lysine 41. Substrate is bound at residue arginine 89. Residues serine 102, isoleucine 119 to asparagine 121, and threonine 144 each bind NAD(+). Residue asparagine 121–aspartate 124 coordinates substrate. Aspartate 149–arginine 152 lines the substrate pocket. Histidine 176 functions as the Proton acceptor in the catalytic mechanism. Threonine 231 is a binding site for substrate.

It belongs to the LDH/MDH superfamily. LDH family. As to quaternary structure, homotetramer.

It is found in the cytoplasm. The catalysed reaction is (S)-lactate + NAD(+) = pyruvate + NADH + H(+). Its pathway is fermentation; pyruvate fermentation to lactate; (S)-lactate from pyruvate: step 1/1. Catalyzes the conversion of lactate to pyruvate. In Fusobacterium nucleatum subsp. nucleatum (strain ATCC 25586 / DSM 15643 / BCRC 10681 / CIP 101130 / JCM 8532 / KCTC 2640 / LMG 13131 / VPI 4355), this protein is L-lactate dehydrogenase.